A 132-amino-acid polypeptide reads, in one-letter code: Small ribosomal subunit protein uS8c (132 aa).

Belongs to the universal ribosomal protein uS8 family. Part of the 30S ribosomal subunit.

The protein localises to the plastid. It localises to the chloroplast. Its function is as follows. One of the primary rRNA binding proteins, it binds directly to 16S rRNA central domain where it helps coordinate assembly of the platform of the 30S subunit. This Rhodomonas salina (Cryptomonas salina) protein is Small ribosomal subunit protein uS8c (rps8).